Consider the following 340-residue polypeptide: Protein HP_1247 (340 aa).

As to quaternary structure, seems to interact with H.pylori HolB.

Could be the functional equivalent of DNA polymerase III delta subunit (HolA). In Helicobacter pylori (strain ATCC 700392 / 26695) (Campylobacter pylori), this protein is Protein HP_1247.